The chain runs to 429 residues: Glutamyl-tRNA reductase (429 aa).

Substrate is bound by residues 56 to 59, serine 119, 124 to 126, and glutamine 130; these read TCNR and EPQ. The Nucleophile role is filled by cysteine 57. 199–204 is an NADP(+) binding site; that stretch reads GAGEMI.

This sequence belongs to the glutamyl-tRNA reductase family. Homodimer.

The catalysed reaction is (S)-4-amino-5-oxopentanoate + tRNA(Glu) + NADP(+) = L-glutamyl-tRNA(Glu) + NADPH + H(+). The protein operates within porphyrin-containing compound metabolism; protoporphyrin-IX biosynthesis; 5-aminolevulinate from L-glutamyl-tRNA(Glu): step 1/2. Catalyzes the NADPH-dependent reduction of glutamyl-tRNA(Glu) to glutamate 1-semialdehyde (GSA). In Janthinobacterium sp. (strain Marseille) (Minibacterium massiliensis), this protein is Glutamyl-tRNA reductase.